The sequence spans 578 residues: A-type ATP synthase subunit A (578 aa).

228-235 (GPFGSGKT) serves as a coordination point for ATP.

This sequence belongs to the ATPase alpha/beta chains family. In terms of assembly, has multiple subunits with at least A(3), B(3), C, D, E, F, G, I and proteolipid K(x).

It localises to the cell membrane. It catalyses the reaction ATP + H2O + 4 H(+)(in) = ADP + phosphate + 5 H(+)(out). ATP hydrolysis stimulated by sulfite, ethanol, glycerol, magnesium and zinc ions, inhibited by diethylstilbestrol (DES) and less well by N,N-dicyclohexylcarbodiimide (DCCD). Its function is as follows. Component of the A-type ATP synthase that produces ATP from ADP in the presence of a proton gradient across the membrane. The A chain is the catalytic subunit. The sequence is that of A-type ATP synthase subunit A from Methanosarcina mazei (strain ATCC BAA-159 / DSM 3647 / Goe1 / Go1 / JCM 11833 / OCM 88) (Methanosarcina frisia).